The primary structure comprises 392 residues: MASLRRGFGSDQTTASDTKMHYRQLAPTASVRVSPLCLGAMNFGEAHKARYGECSKETAFSIMDYFYSQGGNFIDTANGYQAGESEQWVGEWMKSRDNRDEIVLATKYSTGYMNHEKDKIQINYGGNSAKSMKVSVAASLKKLQTNYIDILYIHWWDYSTSIPELMHSLNDLVVSGQVLYLGVSDTPAWVVSKANQYARDHGLRQFVIYQGMWNAAMRDFERDIIPMCRDEGMGLAPYGTLGQGSFQTEEGRKQREKDNPGRKFGAKSLPYVEVSKVLEKLANAKGKAITDVALAYVLQKTPYVFPIVGGRKLEHIQGNVAALQVALSEAEVEEIEAAYPFDAGFPHTFLSGTLFDGAKPTAAQGPGDVFLTKWQGDIDWVEAPKAIRPSGQ.

Position 75 (aspartate 75) interacts with NADP(+). Tyrosine 80 acts as the Proton donor in catalysis. NADP(+) contacts are provided by residues 184–185, glutamine 210, 239–249, and 311–319; these read SD, GTLGQGSFQTE, and RKLEHIQGN. Residues 242–263 are disordered; sequence GQGSFQTEEGRKQREKDNPGRK. Residues 249–261 show a composition bias toward basic and acidic residues; the sequence is EEGRKQREKDNPG.

This sequence belongs to the aldo/keto reductase family. Aldo/keto reductase 2 subfamily.

It participates in mycotoxin biosynthesis. In terms of biological role, norsolorinic acid reductase; part of the fragmented gene cluster that mediates the biosynthesis of dothistromin (DOTH), a polyketide toxin very similar in structure to the aflatoxin precursor, versicolorin B. The first step of the pathway is the conversion of acetate to norsolorinic acid (NOR) and requires the fatty acid synthase subunits hexA and hexB, as well as the polyketide synthase pksA. PksA combines a hexanoyl starter unit and 7 malonyl-CoA extender units to synthesize the precursor NOR. The hexanoyl starter unit is provided to the acyl-carrier protein (ACP) domain by the fungal fatty acid synthase hexA/hexB. The second step is the conversion of NOR to averantin (AVN) and requires the norsolorinic acid ketoreductase nor1, which catalyzes the dehydration of norsolorinic acid to form (1'S)-averantin. The cytochrome P450 monooxygenase avnA then catalyzes the hydroxylation of AVN to 5'hydroxyaverantin (HAVN). The next step is performed by adhA that transforms HAVN to averufin (AVF). Averufin might then be converted to hydroxyversicolorone by cypX and avfA. Hydroxyversicolorone is further converted versiconal hemiacetal acetate (VHA) by moxY. VHA is then the substrate for the versiconal hemiacetal acetate esterase est1 to yield versiconal (VAL). Versicolorin B synthase vbsA then converts VAL to versicolorin B (VERB) by closing the bisfuran ring. Then, the activity of the versicolorin B desaturase verB leads to versicolorin A (VERA). DotB, a predicted chloroperoxidase, may perform epoxidation of the A-ring of VERA. Alternatively, a cytochrome P450, such as cypX or avnA could catalyze this step. It is also possible that another, uncharacterized, cytochrome P450 enzyme is responsible for this step. Opening of the epoxide could potentially be achieved by the epoxide hydrolase epoA. However, epoA seems not to be required for DOTH biosynthesis, but other epoxide hydrolases may have the ability to complement this hydrolysis. Alternatively, opening of the epoxide ring could be achieved non-enzymatically. The next step is the deoxygenation of ring A to yield the 5,8-dihydroxyanthraquinone which is most likely catalyzed by the NADPH dehydrogenase encoded by ver1. The last stages of DOTH biosynthesis are proposed to involve hydroxylation of the bisfuran. OrdB and norB might have oxidative roles here. An alternative possibility is that cytochrome P450 monoogenases such as avnA and cypX might perform these steps in addition to previously proposed steps. The protein is Norsolorinic acid reductase B of Dothistroma septosporum (strain NZE10 / CBS 128990) (Red band needle blight fungus).